A 367-amino-acid polypeptide reads, in one-letter code: MRRMLVIRWILAIHLIATQVFAERIKDIATLAGVRVNQLVGYGLVVGLSGTGDKTGTKFTEDSFANMLTQLGINVPPGVRLNSKNIAAVMVTANLSSFMKKGQTMDVNISSIGDSKSLLGGTLLLTPLKGADGRVYAMSQGNVVVSGISASGSDGSSVTVNVPSGGRIPNGATIEADIPNPFYYSNSLTYNLHTPDFTTAKRMSDAINELMGPGTAKAIDAGSVVVTAPKKLSQRVDYVSVLENIEFKPGEAMAKIIINARTGTVVISSNVIVKSAAVSHGNLVVSITETPVISQPNAFASGRTVATQQSQVNIQQKNNRAFILPKGTTLKDIVRGINAVGATPADVISILEALQQAGALSATLIVI.

Positions Met1 to Ala22 are cleaved as a signal peptide.

Belongs to the FlgI family. The basal body constitutes a major portion of the flagellar organelle and consists of four rings (L,P,S, and M) mounted on a central rod.

The protein localises to the periplasm. Its subcellular location is the bacterial flagellum basal body. Functionally, assembles around the rod to form the L-ring and probably protects the motor/basal body from shearing forces during rotation. The protein is Flagellar P-ring protein of Legionella pneumophila (strain Corby).